A 296-amino-acid chain; its full sequence is Cytidine deaminase (296 aa).

CMP/dCMP-type deaminase domains follow at residues 47–167 and 186–296; these read SQDE…FGPA and ESAD…VDPV. Position 88 to 90 (88 to 90) interacts with substrate; it reads NLE. Histidine 101 contacts Zn(2+). The Proton donor role is filled by glutamate 103. Zn(2+) contacts are provided by cysteine 128 and cysteine 131.

The protein belongs to the cytidine and deoxycytidylate deaminase family. In terms of assembly, homodimer. Zn(2+) is required as a cofactor.

It carries out the reaction cytidine + H2O + H(+) = uridine + NH4(+). It catalyses the reaction 2'-deoxycytidine + H2O + H(+) = 2'-deoxyuridine + NH4(+). In terms of biological role, this enzyme scavenges exogenous and endogenous cytidine and 2'-deoxycytidine for UMP synthesis. In Shewanella loihica (strain ATCC BAA-1088 / PV-4), this protein is Cytidine deaminase.